The sequence spans 105 residues: DNA-directed RNA polymerase subunit omega (105 aa).

The protein belongs to the RNA polymerase subunit omega family. The RNAP catalytic core consists of 2 alpha, 1 beta, 1 beta' and 1 omega subunit. When a sigma factor is associated with the core the holoenzyme is formed, which can initiate transcription.

It carries out the reaction RNA(n) + a ribonucleoside 5'-triphosphate = RNA(n+1) + diphosphate. Promotes RNA polymerase assembly. Latches the N- and C-terminal regions of the beta' subunit thereby facilitating its interaction with the beta and alpha subunits. This Streptococcus equi subsp. equi (strain 4047) protein is DNA-directed RNA polymerase subunit omega.